Consider the following 184-residue polypeptide: Large ribosomal subunit protein uL5 (184 aa).

It belongs to the universal ribosomal protein uL5 family. In terms of assembly, part of the 50S ribosomal subunit; part of the 5S rRNA/L5/L18/L25 subcomplex. Contacts the 5S rRNA and the P site tRNA. Forms a bridge to the 30S subunit in the 70S ribosome.

This is one of the proteins that bind and probably mediate the attachment of the 5S RNA into the large ribosomal subunit, where it forms part of the central protuberance. In the 70S ribosome it contacts protein S13 of the 30S subunit (bridge B1b), connecting the 2 subunits; this bridge is implicated in subunit movement. Contacts the P site tRNA; the 5S rRNA and some of its associated proteins might help stabilize positioning of ribosome-bound tRNAs. This is Large ribosomal subunit protein uL5 from Wolinella succinogenes (strain ATCC 29543 / DSM 1740 / CCUG 13145 / JCM 31913 / LMG 7466 / NCTC 11488 / FDC 602W) (Vibrio succinogenes).